We begin with the raw amino-acid sequence, 418 residues long: MFRRLLIATVVGILAAFAVAGFRHAMLLLEWLFLNNDSGSLVNAATNLSPWRRLLTPALGGLAAGLLLMGWQKFTQQRPHAPTDYMEALQTDGQFDYAASLVKSLASLLVVTSGSAIGREGAMILLAALAASCFAQRFTPRQEWKLWIACGAAAGMAAAYRAPLAGSLFIAEVLFGTMMLASLGPVIISAVVALLVSNLINHSDALLYNVQLSVTVQARDYALIISTGVLAGLCGPLLLTLMNACHRGFVSLKLAPPWQLALGGLIVGLLSLFTPAVWGNGYSTVQSFLTAPPLLMIIAGIFLCKLCAVLASSGSGAPGGVFTPTLFIGLAIGMLYGRSLGLWFPDGEEITLLLGLTGMATLLAATTHAPIMSTLMICEMTGEYQLLPGLLIACVIASVISRTLHRDSIYRQHTAQHS.

The next 10 membrane-spanning stretches (helical) occupy residues 5 to 25, 54 to 74, 146 to 166, 168 to 188, 222 to 242, 258 to 278, 291 to 311, 316 to 336, 352 to 372, and 380 to 400; these read LLIA…FRHA, LLTP…WQKF, LWIA…PLAG, LFIA…PVII, ALII…LTLM, WQLA…PAVW, APPL…AVLA, GAPG…GMLY, LLLG…APIM, and MTGE…ASVI.

The protein belongs to the chloride channel (TC 2.A.49) family. ClcB subfamily.

The protein localises to the cell inner membrane. Functionally, probably acts as an electrical shunt for an outwardly-directed proton pump that is linked to amino acid decarboxylation, as part of the extreme acid resistance (XAR) response. In Escherichia coli (strain ATCC 8739 / DSM 1576 / NBRC 3972 / NCIMB 8545 / WDCM 00012 / Crooks), this protein is Voltage-gated ClC-type chloride channel ClcB.